We begin with the raw amino-acid sequence, 115 residues long: Secreted RxLR effector protein 2 (115 aa).

The N-terminal stretch at 1-22 (MICRSPLIVVMLFVIAAHTVLA) is a signal peptide. Residues 57–82 (RFLRQETTFEKKLGVNDVHAVHAEER) carry the RxLR-dEER motif.

The protein belongs to the RxLR effector family.

Its subcellular location is the secreted. It is found in the host cytoplasm. The protein resides in the host nucleus. In terms of biological role, effector that acts as a broad suppressor of cell death to interrupt plant immunity. Inhibits cell death induced by cell death-inducing proteins, including the PAMP elicitor INF1 from P.infestans. The polypeptide is Secreted RxLR effector protein 2 (Plasmopara viticola (Downy mildew of grapevine)).